A 387-amino-acid chain; its full sequence is S-adenosylmethionine synthase (387 aa).

Histidine 19 contacts ATP. Position 21 (aspartate 21) interacts with Mg(2+). K(+) is bound at residue glutamate 47. Glutamine 103 serves as a coordination point for L-methionine. The flexible loop stretch occupies residues 103–113 (QSPDIAQGVEL). Residues 167–169 (DMK), 233–234 (RF), aspartate 242, 248–249 (RK), alanine 265, and lysine 269 each bind ATP. Aspartate 242 provides a ligand contact to L-methionine. Residue lysine 273 coordinates L-methionine.

It belongs to the AdoMet synthase family. As to quaternary structure, homotetramer; dimer of dimers. It depends on Mg(2+) as a cofactor. K(+) is required as a cofactor.

It localises to the cytoplasm. The catalysed reaction is L-methionine + ATP + H2O = S-adenosyl-L-methionine + phosphate + diphosphate. It functions in the pathway amino-acid biosynthesis; S-adenosyl-L-methionine biosynthesis; S-adenosyl-L-methionine from L-methionine: step 1/1. Functionally, catalyzes the formation of S-adenosylmethionine (AdoMet) from methionine and ATP. The overall synthetic reaction is composed of two sequential steps, AdoMet formation and the subsequent tripolyphosphate hydrolysis which occurs prior to release of AdoMet from the enzyme. The chain is S-adenosylmethionine synthase from Mycoplasma capricolum subsp. capricolum (strain California kid / ATCC 27343 / NCTC 10154).